The chain runs to 209 residues: Thymidylate kinase (209 aa).

Residue Gly-10–Thr-17 participates in ATP binding.

Belongs to the thymidylate kinase family.

The catalysed reaction is dTMP + ATP = dTDP + ADP. Its function is as follows. Phosphorylation of dTMP to form dTDP in both de novo and salvage pathways of dTTP synthesis. The protein is Thymidylate kinase of Pediococcus pentosaceus (strain ATCC 25745 / CCUG 21536 / LMG 10740 / 183-1w).